Here is a 158-residue protein sequence, read N- to C-terminus: Deoxyuridine 5'-triphosphate nucleotidohydrolase (158 aa).

Substrate-binding positions include 66-68 (RSG), Asn79, 83-85 (TID), and Lys93. A disordered region spans residues 139–158 (RGFGSSGVARKGHYQGKPLA).

The protein belongs to the dUTPase family. Mg(2+) serves as cofactor.

It carries out the reaction dUTP + H2O = dUMP + diphosphate + H(+). The protein operates within pyrimidine metabolism; dUMP biosynthesis; dUMP from dCTP (dUTP route): step 2/2. Functionally, this enzyme is involved in nucleotide metabolism: it produces dUMP, the immediate precursor of thymidine nucleotides and it decreases the intracellular concentration of dUTP so that uracil cannot be incorporated into DNA. In Helicobacter hepaticus (strain ATCC 51449 / 3B1), this protein is Deoxyuridine 5'-triphosphate nucleotidohydrolase.